Consider the following 271-residue polypeptide: Urease accessory protein UreD (271 aa).

The protein belongs to the UreD family. UreD, UreF and UreG form a complex that acts as a GTP-hydrolysis-dependent molecular chaperone, activating the urease apoprotein by helping to assemble the nickel containing metallocenter of UreC. The UreE protein probably delivers the nickel.

The protein localises to the cytoplasm. Its function is as follows. Required for maturation of urease via the functional incorporation of the urease nickel metallocenter. The sequence is that of Urease accessory protein UreD from Bacillus sp. (strain TB-90).